The following is a 130-amino-acid chain: Sulfurtransferase TusD (130 aa).

The active-site Cysteine persulfide intermediate is C78.

It belongs to the DsrE/TusD family. In terms of assembly, heterohexamer, formed by a dimer of trimers. The hexameric TusBCD complex contains 2 copies each of TusB, TusC and TusD. The TusBCD complex interacts with TusE.

The protein localises to the cytoplasm. In terms of biological role, part of a sulfur-relay system required for 2-thiolation of 5-methylaminomethyl-2-thiouridine (mnm(5)s(2)U) at tRNA wobble positions. Accepts sulfur from TusA and transfers it in turn to TusE. The protein is Sulfurtransferase TusD of Buchnera aphidicola subsp. Baizongia pistaciae (strain Bp).